The chain runs to 115 residues: NAD(P)H-quinone oxidoreductase subunit M (115 aa).

It belongs to the complex I NdhM subunit family. NDH-1 can be composed of about 15 different subunits; different subcomplexes with different compositions have been identified which probably have different functions.

The protein localises to the cellular thylakoid membrane. It carries out the reaction a plastoquinone + NADH + (n+1) H(+)(in) = a plastoquinol + NAD(+) + n H(+)(out). It catalyses the reaction a plastoquinone + NADPH + (n+1) H(+)(in) = a plastoquinol + NADP(+) + n H(+)(out). In terms of biological role, NDH-1 shuttles electrons from an unknown electron donor, via FMN and iron-sulfur (Fe-S) centers, to quinones in the respiratory and/or the photosynthetic chain. The immediate electron acceptor for the enzyme in this species is believed to be plastoquinone. Couples the redox reaction to proton translocation, and thus conserves the redox energy in a proton gradient. Cyanobacterial NDH-1 also plays a role in inorganic carbon-concentration. The polypeptide is NAD(P)H-quinone oxidoreductase subunit M (Prochlorococcus marinus (strain MIT 9211)).